A 614-amino-acid polypeptide reads, in one-letter code: uncharacterized protein (614 aa).

The interval 23–68 (YPIPSHNGDGESEKNSSDSTSSKVNAKVTSSLQGAPSTNDENSVSP) is disordered. Positions 49-68 (KVTSSLQGAPSTNDENSVSP) are enriched in polar residues.

It to C.trachomatis CT875.

This is an uncharacterized protein from Chlamydia muridarum (strain MoPn / Nigg).